The following is a 123-amino-acid chain: MSLTNEQIIEAIASKTVTEIVELIAAMEEKFGVSAAAAVAAAPAAGGAAAAEEKTEFDVVLKSAGANKVAVIKAVRGATGLGLKEAKDLVESAPANLKEGVSKEEAEALKKELEEAGAEVEVK.

It belongs to the bacterial ribosomal protein bL12 family. Homodimer. Part of the ribosomal stalk of the 50S ribosomal subunit. Forms a multimeric L10(L12)X complex, where L10 forms an elongated spine to which 2 to 4 L12 dimers bind in a sequential fashion. Binds GTP-bound translation factors.

Functionally, forms part of the ribosomal stalk which helps the ribosome interact with GTP-bound translation factors. Is thus essential for accurate translation. In Haemophilus influenzae (strain 86-028NP), this protein is Large ribosomal subunit protein bL12.